We begin with the raw amino-acid sequence, 220 residues long: Deoxyribose-phosphate aldolase (220 aa).

D89 functions as the Proton donor/acceptor in the catalytic mechanism. K151 serves as the catalytic Schiff-base intermediate with acetaldehyde. K180 acts as the Proton donor/acceptor in catalysis.

The protein belongs to the DeoC/FbaB aldolase family. DeoC type 1 subfamily.

The protein localises to the cytoplasm. The enzyme catalyses 2-deoxy-D-ribose 5-phosphate = D-glyceraldehyde 3-phosphate + acetaldehyde. The protein operates within carbohydrate degradation; 2-deoxy-D-ribose 1-phosphate degradation; D-glyceraldehyde 3-phosphate and acetaldehyde from 2-deoxy-alpha-D-ribose 1-phosphate: step 2/2. Catalyzes a reversible aldol reaction between acetaldehyde and D-glyceraldehyde 3-phosphate to generate 2-deoxy-D-ribose 5-phosphate. The protein is Deoxyribose-phosphate aldolase of Staphylococcus epidermidis (strain ATCC 12228 / FDA PCI 1200).